The primary structure comprises 277 residues: Large ribosomal subunit protein uL2 (277 aa).

Disordered regions lie at residues 1 to 58 (MGIR…GGGH) and 223 to 277 (GVVM…GKKR). Residues 23-33 (EITRSEPEKSL) show a composition bias toward basic and acidic residues. Over residues 37 to 58 (LHGRGGRNAHGKITTRHKGGGH) the composition is skewed to basic residues. Basic and acidic residues predominate over residues 251–267 (GKPEGRTRRNKPSDKLI). A compositionally biased stretch (basic residues) spans 268–277 (VRRRRTGKKR).

The protein belongs to the universal ribosomal protein uL2 family. As to quaternary structure, part of the 50S ribosomal subunit. Forms a bridge to the 30S subunit in the 70S ribosome.

One of the primary rRNA binding proteins. Required for association of the 30S and 50S subunits to form the 70S ribosome, for tRNA binding and peptide bond formation. It has been suggested to have peptidyltransferase activity; this is somewhat controversial. Makes several contacts with the 16S rRNA in the 70S ribosome. This Saccharopolyspora erythraea (strain ATCC 11635 / DSM 40517 / JCM 4748 / NBRC 13426 / NCIMB 8594 / NRRL 2338) protein is Large ribosomal subunit protein uL2.